Here is a 1848-residue protein sequence, read N- to C-terminus: Cellulose-binding protein A (1848 aa).

The N-terminal stretch at 1-28 is a signal peptide; sequence MQKKKSLNLLLALMMVFALVLPSIPALA. In terms of domain architecture, CBM3 spans 29–190; the sequence is ATSSMSVEFY…GAKVLGTAPG (162 aa). Cohesin domains follow at residues 291-428, 435-570, 668-801, 810-943, 952-1085, 1094-1227, 1236-1369, 1377-1511, and 1709-1847; these read VTAT…TVTI, MQIS…SVTI, VTAT…SVTI, VKAT…RLTI, and FAVK…SVKV.

Post-translationally, the N-terminus is blocked. In terms of processing, glycosylated.

It localises to the secreted. Binds to cellulose fibers and coordinates cellulase enzymes. The sequence is that of Cellulose-binding protein A (cbpA) from Clostridium cellulovorans.